The following is a 493-amino-acid chain: 3-octaprenyl-4-hydroxybenzoate carboxy-lyase (493 aa).

Mn(2+) is bound at residue asparagine 172. Prenylated FMN-binding positions include 175–177 (IYR), 189–191 (RWL), and 194–195 (RG). Residue glutamate 238 participates in Mn(2+) binding. Catalysis depends on aspartate 287, which acts as the Proton donor.

It belongs to the UbiD family. In terms of assembly, homohexamer. The cofactor is prenylated FMN. Mn(2+) is required as a cofactor.

Its subcellular location is the cell membrane. The enzyme catalyses a 4-hydroxy-3-(all-trans-polyprenyl)benzoate + H(+) = a 2-(all-trans-polyprenyl)phenol + CO2. Its pathway is cofactor biosynthesis; ubiquinone biosynthesis. Its function is as follows. Catalyzes the decarboxylation of 3-octaprenyl-4-hydroxy benzoate to 2-octaprenylphenol, an intermediate step in ubiquinone biosynthesis. The chain is 3-octaprenyl-4-hydroxybenzoate carboxy-lyase from Shewanella sp. (strain MR-4).